An 846-amino-acid chain; its full sequence is MSSSHTPMMQQYLRIKTDYPDMLLFYRMGDFYELFFDDAKRASQLLDLTLTHRGQSADKPIPMAGVPYHAVENYLARLLKKGESVAICEQIGDPATSKGPVERQVTRIITPGTVTDEALLDARKDNILLAIHTQKQKIGIAWVDLGGGRFHLQELTEEHQLNAELVRLQPAELLCKESTPLPSFCSNFAVKFRPGWEFDASNAHKLLCEQFSVTDLSAFGEQNYPTALIAAGALLAYLKTTQKQSLPHLTTLTLEQSEDYLQLDASTQKHLELFENIHGGGEHCLLSILDKTACAMGSRLLKRWLGKPLKQHAIIQTRQQAIKEIIFLQQDVSLHQLIKQCADVERIVSRIALKSARPRDLVSLLQTLTLLPAIHDELQENKSLLINEIKKEISPLPLLQQLLETAIIDNPPMLIRDGGVIAPGFDEELDELRNLSSNAHETLVKLEQEEKNRTGLSTLKLGYNSVQGFYIELSKAQAQNAPPHFHRKQTLKNVERYITPELKLFEDKVLSAQSKALAREKWLYDNLLEEIQQYIPELSDLAKSLAQLDVLVTLAERAQSLNWNCPNLVPESGIMIQAGRHPVIEPLLQERFIANDLELKPNQNMLLITGPNMGGKSTYMRQTALIVLLSHIGSFVPADEVTLGPLDRIFTRIGASDDLSSGRSTFMVEMTETAQILRQATSQSLVLIDEIGRGTSTYDGMALAYASCAFLASTIKAYTLFSTHYLELTELPKEFSCIRNVHLQASIKTGQIVFLYRVEEGCANRSYGLEVAELAGIPKEVLKLAHEHLNQIQDTQSILVQTQIIKPPTSPVLTELKKIDPDRLTAKEALDLIYKLKHLECAESIN.

Residue 610–617 (GPNMGGKS) coordinates ATP.

The protein belongs to the DNA mismatch repair MutS family.

This protein is involved in the repair of mismatches in DNA. It is possible that it carries out the mismatch recognition step. This protein has a weak ATPase activity. This is DNA mismatch repair protein MutS from Legionella pneumophila (strain Paris).